The sequence spans 2150 residues: Genome polyprotein (2150 aa).

A lipid anchor (N-myristoyl glycine; by host) is attached at glycine 2. The Cytoplasmic portion of the chain corresponds to 2–1463; that stretch reads GAQVSRQNVG…ELNLANTIIT (1462 aa). The segment at 565 to 581 is amphipathic alpha-helix; it reads IAQNPVENYIDEVLNEV. The interval 592–611 is disordered; that stretch reads PTTSNSAPALDAAETGHTSS. Catalysis depends on for protease 2A activity residues histidine 868 and aspartate 885. Residues cysteine 902 and cysteine 904 each contribute to the Zn(2+) site. Catalysis depends on cysteine 956, which acts as the For protease 2A activity. 2 residues coordinate Zn(2+): cysteine 962 and histidine 964. The tract at residues 1088–1157 is membrane-binding; the sequence is SDSWLKKFTE…SLRVADMKTQ (70 aa). The interval 1088–1221 is oligomerization; it reads SDSWLKKFTE…PPGAGKSITT (134 aa). The tract at residues 1109–1113 is RNA-binding; it reads GNKIS. Residues 1181–1343 form the SF3 helicase domain; sequence EAKRIKTLYI…FKDPQGKLNV (163 aa). 3 residues coordinate Zn(2+): cysteine 1350, cysteine 1361, and cysteine 1366. A C4-type; degenerate zinc finger spans residues 1350-1366; the sequence is CDVDNRIGNARCCPFVC. Residues 1393 to 1400 form an RNA-binding region; the sequence is EDRRRRQV. Positions 1404–1409 are oligomerization; it reads MTAIFQ. The stretch at 1464–1479 is an intramembrane region; the sequence is IIANVIGMARIIYVIY. The Cytoplasmic segment spans residues 1480-2150; the sequence is KLFCTLQGPY…LLLHEWYEKF (671 aa). Tyrosine 1489 is modified (O-(5'-phospho-RNA)-tyrosine). The Peptidase C3 domain maps to 1508–1686; sequence GPEEEFGMSL…FSAMLLRSYF (179 aa). Residues histidine 1547, glutamate 1578, and cysteine 1654 each act as for protease 3C activity in the active site. A RdRp catalytic domain is found at 1918 to 2031; sequence KCIMAFDYTN…SYIHELDMEA (114 aa). Positions 1924 and 2017 each coordinate Mg(2+).

This sequence belongs to the picornaviruses polyprotein family. As to quaternary structure, interacts with capsid protein VP1 and capsid protein VP3 to form heterotrimeric protomers. In terms of assembly, interacts with capsid protein VP0, and capsid protein VP3 to form heterotrimeric protomers. Five protomers subsequently associate to form pentamers which serve as building blocks for the capsid. Interacts with capsid protein VP2, capsid protein VP3 and capsid protein VP4 following cleavage of capsid protein VP0. Interacts with capsid protein VP1 and capsid protein VP3 in the mature capsid. As to quaternary structure, interacts with capsid protein VP0 and capsid protein VP1 to form heterotrimeric protomers. Five protomers subsequently associate to form pentamers which serve as building blocks for the capsid. Interacts with capsid protein VP4 in the mature capsid. Interacts with protein 2C; this interaction may be important for virion morphogenesis. In terms of assembly, interacts with capsid protein VP1 and capsid protein VP3. Homodimer. As to quaternary structure, homohexamer; forms a hexameric ring structure with 6-fold symmetry characteristic of AAA+ ATPases. Interacts (via N-terminus) with host RTN3 (via reticulon domain); this interaction is important for viral replication. Interacts with capsid protein VP3; this interaction may be important for virion morphogenesis. In terms of assembly, interacts with protein 3CD. Homodimer. Interacts with host GBF1. Interacts (via GOLD domain) with host ACBD3 (via GOLD domain); this interaction allows the formation of a viral protein 3A/ACBD3 heterotetramer with a 2:2 stoichiometry, which will stimulate the recruitment of host PI4KB in order to synthesize PI4P at the viral RNA replication sites. As to quaternary structure, interacts with RNA-directed RNA polymerase. In terms of assembly, interacts with protein 3AB and with RNA-directed RNA polymerase. Interacts with Viral protein genome-linked and with protein 3CD. The cofactor is Mg(2+). Post-translationally, specific enzymatic cleavages in vivo by the viral proteases yield processing intermediates and the mature proteins. In terms of processing, myristoylation is required for the formation of pentamers during virus assembly. Further assembly of 12 pentamers and a molecule of genomic RNA generates the provirion. During virion maturation, immature virions are rendered infectious following cleavage of VP0 into VP4 and VP2. This maturation seems to be an autocatalytic event triggered by the presence of RNA in the capsid and it is followed by a conformational change infectious virion. Post-translationally, myristoylation is required during RNA encapsidation and formation of the mature virus particle. In terms of processing, VPg is uridylylated by the polymerase into VPg-pUpU. This acts as a nucleotide-peptide primer for the genomic RNA replication.

The protein localises to the virion. It is found in the host cytoplasm. Its subcellular location is the host cytoplasmic vesicle membrane. It localises to the host nucleus. The catalysed reaction is a ribonucleoside 5'-triphosphate + H2O = a ribonucleoside 5'-diphosphate + phosphate + H(+). The enzyme catalyses Selective cleavage of Tyr-|-Gly bond in the picornavirus polyprotein.. It carries out the reaction RNA(n) + a ribonucleoside 5'-triphosphate = RNA(n+1) + diphosphate. It catalyses the reaction Selective cleavage of Gln-|-Gly bond in the poliovirus polyprotein. In other picornavirus reactions Glu may be substituted for Gln, and Ser or Thr for Gly.. Its activity is regulated as follows. Replication or transcription is subject to high level of random mutations by the nucleotide analog ribavirin. Forms an icosahedral capsid of pseudo T=3 symmetry with capsid proteins VP2 and VP3. The capsid is 300 Angstroms in diameter, composed of 60 copies of each capsid protein and enclosing the viral positive strand RNA genome. Capsid protein VP1 mainly forms the vertices of the capsid. Capsid protein VP1 interacts with host cell receptor to provide virion attachment to target host cells. This attachment induces virion internalization. Tyrosine kinases are probably involved in the entry process. After binding to its receptor, the capsid undergoes conformational changes. Capsid protein VP1 N-terminus (that contains an amphipathic alpha-helix) and capsid protein VP4 are externalized. Together, they shape a pore in the host membrane through which viral genome is translocated to host cell cytoplasm. Functionally, forms an icosahedral capsid of pseudo T=3 symmetry with capsid proteins VP2 and VP3. The capsid is 300 Angstroms in diameter, composed of 60 copies of each capsid protein and enclosing the viral positive strand RNA genome. Its function is as follows. Lies on the inner surface of the capsid shell. After binding to the host receptor, the capsid undergoes conformational changes. Capsid protein VP4 is released, Capsid protein VP1 N-terminus is externalized, and together, they shape a pore in the host membrane through which the viral genome is translocated into the host cell cytoplasm. In terms of biological role, component of immature procapsids, which is cleaved into capsid proteins VP4 and VP2 after maturation. Allows the capsid to remain inactive before the maturation step. Cysteine protease that cleaves viral polyprotein and specific host proteins. It is responsible for the autocatalytic cleavage between the P1 and P2 regions, which is the first cleavage occurring in the polyprotein. Also cleaves the host translation initiation factor EIF4G1, in order to shut down the capped cellular mRNA translation. Inhibits the host nucleus-cytoplasm protein and RNA trafficking by cleaving host members of the nuclear pores. Counteracts stress granule formation probably by antagonizing its assembly or promoting its dissassembly. Functionally, plays an essential role in the virus replication cycle by acting as a viroporin. Creates a pore in the host endoplasmic reticulum and as a consequence releases Ca2+ in the cytoplasm of infected cell. In turn, high levels of cytoplasmic calcium may trigger membrane trafficking and transport of viral ER-associated proteins to viroplasms, sites of viral genome replication. Its function is as follows. Induces and associates with structural rearrangements of intracellular membranes. Displays RNA-binding, nucleotide binding and NTPase activities. May play a role in virion morphogenesis and viral RNA encapsidation by interacting with the capsid protein VP3. In terms of biological role, localizes the viral replication complex to the surface of membranous vesicles. Together with protein 3CD binds the Cis-Active RNA Element (CRE) which is involved in RNA synthesis initiation. Acts as a cofactor to stimulate the activity of 3D polymerase, maybe through a nucleid acid chaperone activity. Localizes the viral replication complex to the surface of membranous vesicles. It inhibits host cell endoplasmic reticulum-to-Golgi apparatus transport and causes the disassembly of the Golgi complex, possibly through GBF1 interaction. This would result in depletion of MHC, trail receptors and IFN receptors at the host cell surface. Plays an essential role in viral RNA replication by recruiting ACBD3 and PI4KB at the viral replication sites, thereby allowing the formation of the rearranged membranous structures where viral replication takes place. Functionally, acts as a primer for viral RNA replication and remains covalently bound to viral genomic RNA. VPg is uridylylated prior to priming replication into VPg-pUpU. The oriI viral genomic sequence may act as a template for this. The VPg-pUpU is then used as primer on the genomic RNA poly(A) by the RNA-dependent RNA polymerase to replicate the viral genome. During genome replication, the VPg-RNA linkage is removed by the host TDP2, thereby accelerating replication. During the late stage of the replication cycle, host TDP2 is excluded from sites of viral RNA synthesis and encapsidation, allowing for the generation of progeny virions. Its function is as follows. Involved in the viral replication complex and viral polypeptide maturation. It exhibits protease activity with a specificity and catalytic efficiency that is different from protease 3C. Protein 3CD lacks polymerase activity. Protein 3CD binds to the 5'UTR of the viral genome. In terms of biological role, replicates the viral genomic RNA on the surface of intracellular membranes. May form linear arrays of subunits that propagate along a strong head-to-tail interaction called interface-I. Covalently attaches UMP to a tyrosine of VPg, which is used to prime RNA synthesis. The positive stranded RNA genome is first replicated at virus induced membranous vesicles, creating a dsRNA genomic replication form. This dsRNA is then used as template to synthesize positive stranded RNA genomes. ss(+)RNA genomes are either translated, replicated or encapsidated. Major viral protease that mediates proteolytic processing of the polyprotein. Cleaves host EIF5B, contributing to host translation shutoff. Also cleaves host PABPC1, contributing to host translation shutoff. Cleaves host NLRP1, triggers host N-glycine-mediated degradation of the autoinhibitory NLRP1 N-terminal fragment. The chain is Genome polyprotein from Homo sapiens (Human).